A 117-amino-acid chain; its full sequence is Ig heavy chain V region 186-1 (117 aa).

The signal sequence occupies residues 1 to 19; that stretch reads MGWSCIMLFLAATATGVHS. A framework-1 region spans residues 20 to 49; that stretch reads QVQLQQPGAELVKPGASVKLSCKASGYTFT. C41 and C115 are joined by a disulfide. The segment at 50–54 is complementarity-determining-1; the sequence is SYWMH. The tract at residues 55–68 is framework-2; that stretch reads WVKQRPGRGLEWIG. The complementarity-determining-2 stretch occupies residues 69 to 85; sequence RIDPNSGGTKYNEKFKS. The tract at residues 86-117 is framework-3; that stretch reads KATLTVDTSSSTAYMQLHSLTSEDSAVYYCAR.

In Mus musculus (Mouse), this protein is Ig heavy chain V region 186-1.